The primary structure comprises 68 residues: U4-agatoxin-Ao1a (68 aa).

The signal sequence occupies residues 1–25 (MKKSTVIVLSLAAFVLLSVMQFSAA). A propeptide spanning residues 26–36 (EDIKMEVEEQR) is cleaved from the precursor. Intrachain disulfides connect C39-C52, C46-C57, C51-C66, and C59-C64.

The protein belongs to the neurotoxin 33 family. Expressed by the venom gland.

Its subcellular location is the secreted. This Agelena orientalis (Funnel-web spider) protein is U4-agatoxin-Ao1a.